Here is a 42-residue protein sequence, read N- to C-terminus: Serine/threonine-protein phosphatase 5 (42 aa).

Positions 38 to 42 are required for autoinhibition; the sequence is QLGVM.

Belongs to the PPP phosphatase family. PP-5 (PP-T) subfamily. Probably forms a complex composed of chaperones HSP90 and HSP70, co-chaperones STIP1/HOP, CDC37, PPP5C, PTGES3/p23, TSC1 and client protein TSC2. Probably forms a complex composed of chaperones HSP90 and HSP70, co-chaperones CDC37, PPP5C, TSC1 and client protein TSC2, CDK4, AKT, RAF1 and NR3C1; this complex does not contain co-chaperones STIP1/HOP and PTGES3/p23. Part of a complex with HSP90/HSP90AA1 and steroid receptors. Interacts (via TPR repeats) with HSP90AA1 (via TPR repeat-binding motif) or HSPA1A/HSPA1B; the interaction is direct and activates the phosphatase activity. Dissociates from HSPA1A/HSPA1B and HSP90AA1 in response to arachidonic acid. Interacts with CPNE1 (via VWFA domain). Interacts with CDC16, CDC27. Interacts with KLHDC10 (via the 6 Kelch repeats); inhibits the phosphatase activity on MAP3K5. Interacts with ATM and ATR; both interactions are induced by DNA damage and enhance ATM and ATR kinase activity. Interacts with RAD17; reduced by DNA damage. Interacts with nuclear receptors such as NR3C1/GCR and PPARG (activated by agonist); regulates their transactivation activities. Interacts (via TPR repeats) with S100 proteins S100A1, S100A2, S100A6, S100B and S100P; the interactions are calcium-dependent, strongly activate PPP5C phosphatase activity and compete with HSP90AA1 and MAP3K5 interactions. Interacts with SMAD2 and SMAD3 but not with SMAD1; decreases SMAD3 phosphorylation and protein levels. Interacts (via TPR repeats) with CRY1 and CRY2; the interaction with CRY2 down-regulates the phosphatase activity on CSNK1E. Interacts (via TPR repeats) with the active form of RAC1, GNA12 or GNA13; these interactions activate the phosphatase activity and translocate PPP5C to the cell membrane. Interacts with FLCN. Requires Mg(2+) as cofactor. The cofactor is Mn(2+). In terms of processing, activated by at least two different proteolytic cleavages producing a 56 kDa and a 50 kDa form.

The protein resides in the nucleus. Its subcellular location is the cytoplasm. It localises to the cell membrane. It carries out the reaction O-phospho-L-seryl-[protein] + H2O = L-seryl-[protein] + phosphate. The enzyme catalyses O-phospho-L-threonyl-[protein] + H2O = L-threonyl-[protein] + phosphate. With respect to regulation, autoinhibited. In the autoinhibited state, the TPR domain interacts with the catalytic region and prevents substrate access to the catalytic pocket. Allosterically activated by various polyunsaturated fatty acids, free long-chain fatty-acids and long-chain fatty acyl-CoA esters, arachidonic acid being the most effective activator. HSP90A and probably RAC1, GNA12 and GNA13 can also release the autoinhibition by the TPR repeat. Activation by RAC1, GNA12 and GNA13 is synergistic with the one produced by fatty acids binding. Inhibited by okadaic acid. Serine/threonine-protein phosphatase that dephosphorylates a myriad of proteins involved in different signaling pathways including the kinases CSNK1E, ASK1/MAP3K5, PRKDC and RAF1, the nuclear receptors NR3C1, PPARG, ESR1 and ESR2, SMAD proteins and TAU/MAPT. Implicated in wide ranging cellular processes, including apoptosis, differentiation, DNA damage response, cell survival, regulation of ion channels or circadian rhythms, in response to steroid and thyroid hormones, calcium, fatty acids, TGF-beta as well as oxidative and genotoxic stresses. Participates in the control of DNA damage response mechanisms such as checkpoint activation and DNA damage repair through, for instance, the regulation ATM/ATR-signaling and dephosphorylation of PRKDC and TP53BP1. Inhibits ASK1/MAP3K5-mediated apoptosis induced by oxidative stress. Plays a positive role in adipogenesis, mainly through the dephosphorylation and activation of PPARG transactivation function. Also dephosphorylates and inhibits the anti-adipogenic effect of NR3C1. Regulates the circadian rhythms, through the dephosphorylation and activation of CSNK1E. May modulate TGF-beta signaling pathway by the regulation of SMAD3 phosphorylation and protein expression levels. Dephosphorylates and may play a role in the regulation of TAU/MAPT. Through their dephosphorylation, may play a role in the regulation of ions channels such as KCNH2. Dephosphorylate FNIP1, disrupting interaction with HSP90AA1/Hsp90. The protein is Serine/threonine-protein phosphatase 5 (PPP5C) of Oryctolagus cuniculus (Rabbit).